A 315-amino-acid polypeptide reads, in one-letter code: Methionyl-tRNA formyltransferase (315 aa).

113–116 lines the (6S)-5,6,7,8-tetrahydrofolate pocket; sequence SLLP.

Belongs to the Fmt family.

It catalyses the reaction L-methionyl-tRNA(fMet) + (6R)-10-formyltetrahydrofolate = N-formyl-L-methionyl-tRNA(fMet) + (6S)-5,6,7,8-tetrahydrofolate + H(+). In terms of biological role, attaches a formyl group to the free amino group of methionyl-tRNA(fMet). The formyl group appears to play a dual role in the initiator identity of N-formylmethionyl-tRNA by promoting its recognition by IF2 and preventing the misappropriation of this tRNA by the elongation apparatus. The protein is Methionyl-tRNA formyltransferase of Pseudoalteromonas atlantica (strain T6c / ATCC BAA-1087).